We begin with the raw amino-acid sequence, 431 residues long: Enolase (431 aa).

Residue Gln-167 coordinates (2R)-2-phosphoglycerate. Glu-209 functions as the Proton donor in the catalytic mechanism. Mg(2+) contacts are provided by Asp-246, Glu-290, and Asp-317. Residues Lys-342, Arg-371, Ser-372, and Lys-393 each coordinate (2R)-2-phosphoglycerate. Residue Lys-342 is the Proton acceptor of the active site.

Belongs to the enolase family. In terms of assembly, component of the RNA degradosome, a multiprotein complex involved in RNA processing and mRNA degradation. Requires Mg(2+) as cofactor.

It is found in the cytoplasm. The protein resides in the secreted. The protein localises to the cell surface. It catalyses the reaction (2R)-2-phosphoglycerate = phosphoenolpyruvate + H2O. Its pathway is carbohydrate degradation; glycolysis; pyruvate from D-glyceraldehyde 3-phosphate: step 4/5. Its function is as follows. Catalyzes the reversible conversion of 2-phosphoglycerate (2-PG) into phosphoenolpyruvate (PEP). It is essential for the degradation of carbohydrates via glycolysis. In Erwinia tasmaniensis (strain DSM 17950 / CFBP 7177 / CIP 109463 / NCPPB 4357 / Et1/99), this protein is Enolase.